A 550-amino-acid polypeptide reads, in one-letter code: MISDNVKKGVIRSPNRALLKACGYSDEDMEKPFIGVVNSFTEVVPGHIHLKTLSDAVKHGVYANGGTPFEFNTIGICDGIAMGHEGMKYSLPSREIIADAVESMARAHGFDGLVLIPTCDKIVPGMIMGALRLNIPFIVVTGGPMLPGEFQGKKCELISLFEGVGEYQVGKITEEELKSIEECACPGAGSCAGLYTANSMACLTEALGLSLPMCATIHAVDAQKVRIAKKTGSKIVDLVKEDVKPTDILTKEAFENAILVDLALGGSTNTTLHIPAIANEIENKFITLDDFDRLSDEVPHIASIKPGGEHYMIDLHNAGGIPAVLKVLKEKIRNTKTVDGRSTLEIAESVKYVNYDVIRKVEAPVHETAGLRVLKGNLAPNGCVVKIGAVDPKMHKHEGPAKVYNSEDEAIAAILGGKIVEGDVVVIRHEGPSGGPGMREMLSPTSAICGMGLDDSVALITDGRFSGGSRGPCIGHVSPEAAAGGLIAAIENGDIIKIDMIEKEINVDLDESVIKERLSKLEEFEPKIKKGYLSRYSRLVSSADEGAVLK.

D78 is a binding site for Mg(2+). [2Fe-2S] cluster is bound at residue C119. D120 and K121 together coordinate Mg(2+). K121 is modified (N6-carboxylysine). Residue C191 participates in [2Fe-2S] cluster binding. E440 contributes to the Mg(2+) binding site. S466 (proton acceptor) is an active-site residue.

This sequence belongs to the IlvD/Edd family. Homodimer. It depends on [2Fe-2S] cluster as a cofactor. Requires Mg(2+) as cofactor.

It catalyses the reaction (2R)-2,3-dihydroxy-3-methylbutanoate = 3-methyl-2-oxobutanoate + H2O. It carries out the reaction (2R,3R)-2,3-dihydroxy-3-methylpentanoate = (S)-3-methyl-2-oxopentanoate + H2O. It participates in amino-acid biosynthesis; L-isoleucine biosynthesis; L-isoleucine from 2-oxobutanoate: step 3/4. Its pathway is amino-acid biosynthesis; L-valine biosynthesis; L-valine from pyruvate: step 3/4. Its function is as follows. Functions in the biosynthesis of branched-chain amino acids. Catalyzes the dehydration of (2R,3R)-2,3-dihydroxy-3-methylpentanoate (2,3-dihydroxy-3-methylvalerate) into 2-oxo-3-methylpentanoate (2-oxo-3-methylvalerate) and of (2R)-2,3-dihydroxy-3-methylbutanoate (2,3-dihydroxyisovalerate) into 2-oxo-3-methylbutanoate (2-oxoisovalerate), the penultimate precursor to L-isoleucine and L-valine, respectively. The protein is Dihydroxy-acid dehydratase of Methanococcus maripaludis (strain C5 / ATCC BAA-1333).